Consider the following 169-residue polypeptide: 2-C-methyl-D-erythritol 2,4-cyclodiphosphate synthase (169 aa).

Residues D13 and H15 each coordinate a divalent metal cation. Residues 13–15 (DVH) and 39–40 (HS) each bind 4-CDP-2-C-methyl-D-erythritol 2-phosphate. H47 lines the a divalent metal cation pocket. 4-CDP-2-C-methyl-D-erythritol 2-phosphate is bound by residues 61-63 (DIG), 66-70 (FPDTD), F144, and R147.

This sequence belongs to the IspF family. As to quaternary structure, homotrimer. The cofactor is a divalent metal cation.

It carries out the reaction 4-CDP-2-C-methyl-D-erythritol 2-phosphate = 2-C-methyl-D-erythritol 2,4-cyclic diphosphate + CMP. Its pathway is isoprenoid biosynthesis; isopentenyl diphosphate biosynthesis via DXP pathway; isopentenyl diphosphate from 1-deoxy-D-xylulose 5-phosphate: step 4/6. In terms of biological role, involved in the biosynthesis of isopentenyl diphosphate (IPP) and dimethylallyl diphosphate (DMAPP), two major building blocks of isoprenoid compounds. Catalyzes the conversion of 4-diphosphocytidyl-2-C-methyl-D-erythritol 2-phosphate (CDP-ME2P) to 2-C-methyl-D-erythritol 2,4-cyclodiphosphate (ME-CPP) with a corresponding release of cytidine 5-monophosphate (CMP). The protein is 2-C-methyl-D-erythritol 2,4-cyclodiphosphate synthase of Cupriavidus necator (strain ATCC 17699 / DSM 428 / KCTC 22496 / NCIMB 10442 / H16 / Stanier 337) (Ralstonia eutropha).